A 274-amino-acid polypeptide reads, in one-letter code: Thiamine kinase (274 aa).

It belongs to the thiamine kinase family.

It carries out the reaction thiamine + ATP = thiamine phosphate + ADP + H(+). The protein operates within cofactor biosynthesis; thiamine diphosphate biosynthesis; thiamine phosphate from thiamine: step 1/1. Functionally, catalyzes the ATP-dependent phosphorylation of thiamine to thiamine phosphate. Is involved in thiamine salvage. In Salmonella heidelberg (strain SL476), this protein is Thiamine kinase.